The following is a 3674-amino-acid chain: Dystrophin-1 (3674 aa).

A disordered region spans residues 1 to 25 (MLFSGASTAKPKKDEKKDKKSDRDP). Positions 11 to 25 (PKKDEKKDKKSDRDP) are enriched in basic and acidic residues. Residues 30–39 (QEWVFVRWAN) form an actin-binding region. The Calponin-homology (CH) domain occupies 129-234 (EKLSEAIKQW…YLMSLYLAMI (106 aa)). The segment at 265-325 (SQPSTSSSSA…KSGKSKKARR (61 aa)) is disordered. Spectrin repeat units follow at residues 327–435 (EQLA…VLQQ), 436–541 (QIHL…KLDG), and 612–656 (CELV…TLVK). A compositionally biased stretch (basic and acidic residues) spans 655-674 (VKSGKADVKQVQESQNEQKE). Disordered stretches follow at residues 655–689 (VKSG…TEGE), 968–991 (NSQM…EKRR), 1587–1606 (ASAE…SSPS), 1796–1833 (LSAT…SRSS), and 2387–2466 (MNDS…GSTG). Residues 675 to 685 (QPASSEGLSTD) are compositionally biased toward polar residues. The span at 975–991 (TVEKAETRKAEMEEKRR) shows a compositional bias: basic and acidic residues. The segment covering 1796–1830 (LSATEKKPVETVKSTIPDRPEVPEEPEKSSPDRTS) has biased composition (basic and acidic residues). Residues 2391–2411 (GGDTTESRSTVVEMTSVHTKQ) show a composition bias toward polar residues. 4 Spectrin repeats span residues 2576 to 2673 (RNEM…VLEA), 2725 to 2789 (FKTL…RLEK), 2792 to 2905 (QEWE…RLKK), and 2926 to 3032 (QRLQ…AVRN). The WW domain maps to 3047 to 3081 (QSVTLPWQRAISKSNLLPYYIEQTSEKTQWEHPVW). A ZZ-type zinc finger spans residues 3301-3357 (KHASKCNVCKMFPIIGIRYRCLTCFNCDLCQNCFFSQRTAKSHRTNHPMQEYCEKTT). Zn(2+) is bound by residues cysteine 3306, cysteine 3309, cysteine 3321, cysteine 3324, cysteine 3330, cysteine 3333, histidine 3343, and histidine 3347. Disordered regions lie at residues 3481–3522 (STME…TQSQ) and 3568–3645 (KQQA…QMQN). The segment covering 3568-3579 (KQQAPLSTNSLL) has biased composition (polar residues).

Component of the dystrophin glycoprotein complex (DGC). Interacts with dyb-1 and stn-1 to form the DGC. Interacts with stn-2. As to expression, expressed in body wall, head, pharyngeal and vulval muscles, from late embryogenesis to adulthood (at protein level).

The protein localises to the cell membrane. The protein resides in the sarcolemma. Its subcellular location is the cytoplasm. It localises to the cytoskeleton. Functionally, plays a role in cholinergic transmission and as a functional partner of dystrobrevin (dyb-1), necessary for muscle maintenance. Required for neuronal positioning. May play a role in the localization of slo-1 near dense bodies in the muscle. This is Dystrophin-1 (dys-1) from Caenorhabditis elegans.